A 623-amino-acid chain; its full sequence is Glutathione import ATP-binding protein GsiA (623 aa).

ABC transporter domains lie at 15–269 (VENL…RALL) and 314–564 (LRVR…RKLL). Residues 49–56 (GESGSGKS) and 357–364 (GESGSGKS) each bind ATP.

This sequence belongs to the ABC transporter superfamily. Glutathione importer (TC 3.A.1.5.11) family. The complex is composed of two ATP-binding proteins (GsiA), two transmembrane proteins (GsiC and GsiD) and a solute-binding protein (GsiB).

It localises to the cell inner membrane. It catalyses the reaction glutathione(out) + ATP + H2O = glutathione(in) + ADP + phosphate + H(+). Its function is as follows. Part of the ABC transporter complex GsiABCD involved in glutathione import. Responsible for energy coupling to the transport system. The chain is Glutathione import ATP-binding protein GsiA from Shigella flexneri serotype 5b (strain 8401).